The chain runs to 265 residues: Transcriptional repressor DcmR (265 aa).

The H-T-H motif DNA-binding region spans 17–36 (LDIKQAASLLNVSEASLRRW).

As to quaternary structure, monomer.

Functionally, transcriptional repressor of the dcmA gene and of its own gene. The sequence is that of Transcriptional repressor DcmR (dcmR) from Methylorubrum extorquens (strain DSM 6343 / CIP 106787 / DM4) (Methylobacterium extorquens).